Consider the following 129-residue polypeptide: Small ribosomal subunit protein uS9 (129 aa).

Belongs to the universal ribosomal protein uS9 family.

This Gemmatimonas aurantiaca (strain DSM 14586 / JCM 11422 / NBRC 100505 / T-27) protein is Small ribosomal subunit protein uS9.